Reading from the N-terminus, the 101-residue chain is Small ribosomal subunit protein uS14 (101 aa).

This sequence belongs to the universal ribosomal protein uS14 family. As to quaternary structure, part of the 30S ribosomal subunit. Contacts proteins S3 and S10.

Binds 16S rRNA, required for the assembly of 30S particles and may also be responsible for determining the conformation of the 16S rRNA at the A site. This Erythrobacter litoralis (strain HTCC2594) protein is Small ribosomal subunit protein uS14.